The chain runs to 135 residues: Holo-[acyl-carrier-protein] synthase (135 aa).

The Mg(2+) site is built by Asp-8 and Glu-57.

This sequence belongs to the P-Pant transferase superfamily. AcpS family. It depends on Mg(2+) as a cofactor.

The protein resides in the cytoplasm. The enzyme catalyses apo-[ACP] + CoA = holo-[ACP] + adenosine 3',5'-bisphosphate + H(+). Functionally, transfers the 4'-phosphopantetheine moiety from coenzyme A to a Ser of acyl-carrier-protein. This chain is Holo-[acyl-carrier-protein] synthase, found in Xanthobacter autotrophicus (strain ATCC BAA-1158 / Py2).